The chain runs to 555 residues: Synaptotagmin-14 (555 aa).

The Extracellular portion of the chain corresponds to 1 to 24 (MAIEGGERTCGVHELICIRKVSPE). Residues 25-47 (AVGFLSAVGVFIVLMLLLFLYIN) traverse the membrane as a helical; Signal-anchor for type III membrane protein segment. At 48–555 (KKFCFENVGG…VCRWHALLES (508 aa)) the chain is on the cytoplasmic side. 3 disordered regions span residues 76 to 97 (YNSY…EALG), 157 to 179 (TPPL…HLSC), and 205 to 258 (CPSE…PEPE). Positions 211 to 224 (TGHEAESYHNKGYE) are enriched in basic and acidic residues. 2 C2 domains span residues 260–379 (KYGT…SLPV) and 415–550 (SVPE…CRWH).

This sequence belongs to the synaptotagmin family. As to quaternary structure, homodimer. Can also form heterodimers. As to expression, expressed in heart and testis. Expressed in brain (especially in the cerebellum).

The protein localises to the membrane. In terms of biological role, may be involved in the trafficking and exocytosis of secretory vesicles in non-neuronal tissues. Is Ca(2+)-independent. The sequence is that of Synaptotagmin-14 (Syt14) from Mus musculus (Mouse).